We begin with the raw amino-acid sequence, 317 residues long: Apolipoprotein E (317 aa).

The first 18 residues, 1-18 (MKVLWAALLVTFLAGCQA), serve as a signal peptide directing secretion. Repeat copies occupy residues 80-101 (ALMDETMKELKAYRSELEEQLT), 102-123 (PVAEETRARLSKELQAAQARLG), 124-145 (ADMEDVRGRLVQYRGEVQAMLG), 146-167 (QSTEELRARLASHLRKLRKRLL), 168-189 (RDADDLQKRLAVYQAGAREGAE), 190-211 (RGVSAIRERLGPLVEQGRVRAA), 212-233 (TVGSLAGQPLQERAQAWGERLR), and 234-255 (ARMEEVGGRTRDRLDEVKEQVA). Residues 80-255 (ALMDETMKEL…RLDEVKEQVA (176 aa)) are 8 X 22 AA approximate tandem repeats. Met-143 is subject to Methionine sulfoxide. Ser-147 is subject to Phosphoserine. Residues 158–168 (HLRKLRKRLLR) are LDL and other lipoprotein receptors binding. Residue 162-165 (LRKR) participates in heparin binding. Residues 210–290 (AATVGSLAGQ…SWFEPLVEDM (81 aa)) are lipid-binding and lipoprotein association. 229–236 (GERLRARM) lines the heparin pocket. The interval 266–317 (QQIRLQAEAFQARLKSWFEPLVEDMQRQWAGLVEKVQAAVGTSAAPVPSDNH) is homooligomerization. Residues 278 to 290 (RLKSWFEPLVEDM) are specificity for association with VLDL.

The protein belongs to the apolipoprotein A1/A4/E family. As to quaternary structure, homotetramer. May interact with ABCA1; functionally associated with ABCA1 in the biogenesis of HDLs. May interact with APP/A4 amyloid-beta peptide; the interaction is extremely stable in vitro but its physiological significance is unclear. May interact with MAPT. May interact with MAP2. In the cerebrospinal fluid, interacts with secreted SORL1. Interacts with PMEL; this allows the loading of PMEL luminal fragment on ILVs to induce fibril nucleation. In terms of processing, APOE exists as multiple glycosylated and sialylated glycoforms within cells and in plasma. The extent of glycosylation and sialylation are tissue and context specific. Glycated in plasma VLDL. Post-translationally, phosphorylated by FAM20C in the extracellular medium.

It localises to the secreted. It is found in the extracellular space. Its subcellular location is the extracellular matrix. The protein localises to the extracellular vesicle. The protein resides in the endosome. It localises to the multivesicular body. Functionally, APOE is an apolipoprotein, a protein associating with lipid particles, that mainly functions in lipoprotein-mediated lipid transport between organs via the plasma and interstitial fluids. APOE is a core component of plasma lipoproteins and is involved in their production, conversion and clearance. Apolipoproteins are amphipathic molecules that interact both with lipids of the lipoprotein particle core and the aqueous environment of the plasma. As such, APOE associates with chylomicrons, chylomicron remnants, very low density lipoproteins (VLDL) and intermediate density lipoproteins (IDL) but shows a preferential binding to high-density lipoproteins (HDL). It also binds a wide range of cellular receptors including the LDL receptor/LDLR, the LDL receptor-related proteins LRP1, LRP2 and LRP8 and the very low-density lipoprotein receptor/VLDLR that mediate the cellular uptake of the APOE-containing lipoprotein particles. Finally, APOE also has a heparin-binding activity and binds heparan-sulfate proteoglycans on the surface of cells, a property that supports the capture and the receptor-mediated uptake of APOE-containing lipoproteins by cells. A main function of APOE is to mediate lipoprotein clearance through the uptake of chylomicrons, VLDLs, and HDLs by hepatocytes. APOE is also involved in the biosynthesis by the liver of VLDLs as well as their uptake by peripheral tissues ensuring the delivery of triglycerides and energy storage in muscle, heart and adipose tissues. By participating in the lipoprotein-mediated distribution of lipids among tissues, APOE plays a critical role in plasma and tissues lipid homeostasis. APOE is also involved in two steps of reverse cholesterol transport, the HDLs-mediated transport of cholesterol from peripheral tissues to the liver, and thereby plays an important role in cholesterol homeostasis. First, it is functionally associated with ABCA1 in the biogenesis of HDLs in tissues. Second, it is enriched in circulating HDLs and mediates their uptake by hepatocytes. APOE also plays an important role in lipid transport in the central nervous system, regulating neuron survival and sprouting. This chain is Apolipoprotein E (APOE), found in Hylobates lar (Lar gibbon).